The following is a 214-amino-acid chain: ATP phosphoribosyltransferase (214 aa).

It belongs to the ATP phosphoribosyltransferase family. Short subfamily. In terms of assembly, heteromultimer composed of HisG and HisZ subunits.

It is found in the cytoplasm. The enzyme catalyses 1-(5-phospho-beta-D-ribosyl)-ATP + diphosphate = 5-phospho-alpha-D-ribose 1-diphosphate + ATP. It participates in amino-acid biosynthesis; L-histidine biosynthesis; L-histidine from 5-phospho-alpha-D-ribose 1-diphosphate: step 1/9. Catalyzes the condensation of ATP and 5-phosphoribose 1-diphosphate to form N'-(5'-phosphoribosyl)-ATP (PR-ATP). Has a crucial role in the pathway because the rate of histidine biosynthesis seems to be controlled primarily by regulation of HisG enzymatic activity. This Leptothrix cholodnii (strain ATCC 51168 / LMG 8142 / SP-6) (Leptothrix discophora (strain SP-6)) protein is ATP phosphoribosyltransferase.